Reading from the N-terminus, the 31-residue chain is Cytolysin Oshem 2 (31 aa).

The protein localises to the secreted. It localises to the nematocyst. The protein resides in the target cell membrane. In terms of biological role, cytolysin that shows weak hemolysis and weak myonecrosis. This Olindias sambaquiensis (Hydromedusa) protein is Cytolysin Oshem 2.